Here is a 179-residue protein sequence, read N- to C-terminus: Lebocin-3 (179 aa).

The N-terminal stretch at 1–16 (MYKFLVFSSVLVLFFA) is a signal peptide. Residues 17 to 120 (QASCQRFIQP…QPIESHRNTR (104 aa)) constitute a propeptide that is removed on maturation. O-linked (GalNAc...) threonine glycosylation occurs at T135. A propeptide spanning residues 153 to 179 (RRHASEDQEELRQYNEHFLIPRDIFQE) is cleaved from the precursor.

This sequence belongs to the lebocin family. In terms of processing, O-glycosylation is important for the antibacterial activity of lebocin. As to expression, hemolymph. Produced in fat body.

It localises to the secreted. Functionally, antibacterial peptide. This Bombyx mori (Silk moth) protein is Lebocin-3 (LEB3).